Here is a 376-residue protein sequence, read N- to C-terminus: Proton extrusion protein PxcA (376 aa).

4 helical membrane passes run 150-170 (TLIS…VQQM), 251-271 (AVKN…VCII), 299-319 (IILF…QVLL), and 334-354 (FILL…KYWI).

The protein belongs to the CemA family.

It is found in the cell inner membrane. Functionally, required for H(+) efflux immediately after light irradiation to form a rapid H(+) concentration gradient across the thylakoid membranes. Together with PxcL, contributes to transient H(+) uptake following dark to light transition. The polypeptide is Proton extrusion protein PxcA (Prochlorococcus marinus (strain MIT 9303)).